Here is a 418-residue protein sequence, read N- to C-terminus: AP-3 complex subunit mu-1 (418 aa).

Positions asparagine 176–arginine 417 constitute an MHD domain.

The protein belongs to the adaptor complexes medium subunit family. Adaptor protein complex 3 (AP-3) is a heterotetramer composed of two large adaptins (delta-type subunit AP3D1 and beta-type subunit AP3B1 or AP3B2), a medium adaptin (mu-type subunit AP3M1 or AP3M2) and a small adaptin (sigma-type subunit APS1 or AP3S2). Interacts with AGAP1. AP-3 associates with the BLOC-1 complex.

It is found in the golgi apparatus. It localises to the cytoplasmic vesicle membrane. In terms of biological role, part of the AP-3 complex, an adaptor-related complex which is not clathrin-associated. The complex is associated with the Golgi region as well as more peripheral structures. It facilitates the budding of vesicles from the Golgi membrane and may be directly involved in trafficking to lysosomes. In concert with the BLOC-1 complex, AP-3 is required to target cargos into vesicles assembled at cell bodies for delivery into neurites and nerve terminals. This Bos taurus (Bovine) protein is AP-3 complex subunit mu-1 (AP3M1).